The following is a 2083-amino-acid chain: Non-reducing polyketide synthase curS2 (2083 aa).

Residues 9 to 246 (LLFGDVTDPW…NELDIHALQH (238 aa)) form an N-terminal acylcarrier protein transacylase domain (SAT) region. In terms of domain architecture, Ketosynthase family 3 (KS3) spans 366–798 (RDGIAIVGMA…GGNACLLLED (433 aa)). Residues cysteine 543, histidine 678, and histidine 717 each act as for beta-ketoacyl synthase activity in the active site. Residues 895 to 1201 (VFVFTGQGSH…THTLQPNTHN (307 aa)) are malonyl-CoA:ACP transacylase (MAT) domain. The For acyl/malonyl transferase activity role is filled by serine 986. An N-terminal hotdog fold region spans residues 1276–1415 (AQYLVSKSSS…DPAKTQADWD (140 aa)). One can recognise a PKS/mFAS DH domain in the interval 1276–1585 (AQYLVSKSSS…YQELPRVTWK (310 aa)). Residues 1285-1581 (SPKVQVVFRA…IDLRYQELPR (297 aa)) are product template (PT) domain. The C-terminal hotdog fold stretch occupies residues 1437 to 1585 (GHRMQPEVFY…YQELPRVTWK (149 aa)). Residues 1637-1714 (DFDEGLVDAI…DLRRAFGANK (78 aa)) form the Carrier domain. Serine 1674 bears the O-(pantetheine 4'-phosphoryl)serine mark. The interval 1710–1790 (FGANKPKTSK…KMDETDTSPA (81 aa)) is disordered. Positions 1718–1736 (SKPQPGSTTPSSSQSSIPS) are enriched in low complexity. Polar residues predominate over residues 1745 to 1754 (MSDTASSLGS). A compositionally biased stretch (basic and acidic residues) spans 1771–1784 (LEPKPNHHLGKMDE). Positions 1811–2058 (MMADGTGTIA…LSVAGDHLDL (248 aa)) are thioesterase (TE) domain. The For thioesterase activity role is filled by histidine 2065.

It participates in mycotoxin biosynthesis. In terms of biological role, non-reducing polyketide synthase; part of the gene cluster that mediates the biosynthesis of 10,11-dehydrocurvularin, a prevalent fungal phytotoxin with heat shock response and immune-modulatory activities. The highly reducing polyketide synthase curS1 is responsible for biosynthesis up to the tetraketide stage. The non-reducing polyketide synthase curS2 then conducts four additional chain extension cycles, producing the unreduced part of the nascent octaketide from C-1 to C-8 in 10,11-dehydrocurvularin. The polypeptide is Non-reducing polyketide synthase curS2 (Aspergillus terreus).